The chain runs to 215 residues: Pyrrolidone-carboxylate peptidase (215 aa).

Residues glutamate 81, cysteine 144, and histidine 168 contribute to the active site.

Belongs to the peptidase C15 family. In terms of assembly, homotetramer.

It is found in the cytoplasm. It carries out the reaction Release of an N-terminal pyroglutamyl group from a polypeptide, the second amino acid generally not being Pro.. Functionally, removes 5-oxoproline from various penultimate amino acid residues except L-proline. This Bacillus licheniformis (strain ATCC 14580 / DSM 13 / JCM 2505 / CCUG 7422 / NBRC 12200 / NCIMB 9375 / NCTC 10341 / NRRL NRS-1264 / Gibson 46) protein is Pyrrolidone-carboxylate peptidase.